The sequence spans 339 residues: Protein-glutamate methylesterase/protein-glutamine glutaminase 3 (339 aa).

The region spanning 2–119 (NIGIVNDLPL…GLSTDASPQA (118 aa)) is the Response regulatory domain. Asp53 is modified (4-aspartylphosphate). In terms of domain architecture, CheB-type methylesterase spans 141 to 336 (PGPAPTRGQP…PQLIARIALT (196 aa)). Active-site residues include Ser158, His185, and Asp278.

This sequence belongs to the CheB family. Post-translationally, phosphorylated by CheA. Phosphorylation of the N-terminal regulatory domain activates the methylesterase activity.

Its subcellular location is the cytoplasm. The enzyme catalyses [protein]-L-glutamate 5-O-methyl ester + H2O = L-glutamyl-[protein] + methanol + H(+). The catalysed reaction is L-glutaminyl-[protein] + H2O = L-glutamyl-[protein] + NH4(+). In terms of biological role, involved in chemotaxis. Part of a chemotaxis signal transduction system that modulates chemotaxis in response to various stimuli. Catalyzes the demethylation of specific methylglutamate residues introduced into the chemoreceptors (methyl-accepting chemotaxis proteins or MCP) by CheR. Also mediates the irreversible deamidation of specific glutamine residues to glutamic acid. The protein is Protein-glutamate methylesterase/protein-glutamine glutaminase 3 of Burkholderia orbicola (strain AU 1054).